The primary structure comprises 237 residues: Ribosomal RNA small subunit methyltransferase G (237 aa).

S-adenosyl-L-methionine is bound by residues glycine 78, phenylalanine 83, 129-130, and arginine 148; that span reads AE. Residues 218–237 are disordered; that stretch reads KKETPNKYPRKAGMPNKRPL.

It belongs to the methyltransferase superfamily. RNA methyltransferase RsmG family.

The protein localises to the cytoplasm. Its function is as follows. Specifically methylates the N7 position of a guanine in 16S rRNA. This Streptococcus pneumoniae serotype 19F (strain G54) protein is Ribosomal RNA small subunit methyltransferase G.